The following is a 395-amino-acid chain: Succinyl-diaminopimelate desuccinylase (395 aa).

Histidine 74 contacts Zn(2+). The active site involves aspartate 76. Aspartate 107 contributes to the Zn(2+) binding site. The active-site Proton acceptor is glutamate 141. Residues glutamate 142, glutamate 170, and histidine 368 each contribute to the Zn(2+) site.

This sequence belongs to the peptidase M20A family. DapE subfamily. As to quaternary structure, homodimer. Requires Zn(2+) as cofactor. Co(2+) is required as a cofactor.

The catalysed reaction is N-succinyl-(2S,6S)-2,6-diaminopimelate + H2O = (2S,6S)-2,6-diaminopimelate + succinate. Its pathway is amino-acid biosynthesis; L-lysine biosynthesis via DAP pathway; LL-2,6-diaminopimelate from (S)-tetrahydrodipicolinate (succinylase route): step 3/3. Its function is as follows. Catalyzes the hydrolysis of N-succinyl-L,L-diaminopimelic acid (SDAP), forming succinate and LL-2,6-diaminopimelate (DAP), an intermediate involved in the bacterial biosynthesis of lysine and meso-diaminopimelic acid, an essential component of bacterial cell walls. The polypeptide is Succinyl-diaminopimelate desuccinylase (Brucella anthropi (strain ATCC 49188 / DSM 6882 / CCUG 24695 / JCM 21032 / LMG 3331 / NBRC 15819 / NCTC 12168 / Alc 37) (Ochrobactrum anthropi)).